The following is a 273-amino-acid chain: Programmed cell death 1 ligand 2 (273 aa).

Residues 1 to 19 (MIFLLLMLSLELQLHQIAA) form the signal peptide. Residues 20-220 (LFTVTVPKEL…SQMEPRTHPT (201 aa)) lie on the Extracellular side of the membrane. The region spanning 21 to 118 (FTVTVPKELY…AWDYKYLTLK (98 aa)) is the Ig-like V-type domain. N-linked (GlcNAc...) asparagine glycans are attached at residues N37, N64, N157, N163, and N189. 2 disulfide bridges follow: C42–C102 and C143–C192. An Ig-like C2-type domain is found at 122–203 (SYRKINTHIL…FWNTHVRELT (82 aa)). A helical transmembrane segment spans residues 221–241 (WLLHIFIPFCIIAFIFIATVI). At 242–273 (ALRKQLCQKLYSSKDTTKRPVTTTKREVNSAI) the chain is on the cytoplasmic side.

Belongs to the immunoglobulin superfamily. BTN/MOG family. Interacts with PDCD1. As to expression, highly expressed in heart, placenta, pancreas, lung and liver and weakly expressed in spleen, lymph nodes and thymus.

It is found in the secreted. Its subcellular location is the endomembrane system. The protein localises to the cell membrane. In terms of biological role, involved in the costimulatory signal, essential for T-cell proliferation and IFNG production in a PDCD1-independent manner. Interaction with PDCD1 inhibits T-cell proliferation by blocking cell cycle progression and cytokine production. The polypeptide is Programmed cell death 1 ligand 2 (PDCD1LG2) (Homo sapiens (Human)).